Here is a 480-residue protein sequence, read N- to C-terminus: Outer capsid protein VP5 (480 aa).

The involved in membrane permeabilization stretch occupies residues 1–48 (MTSKRLGARFPGFLNRIGSGITRAARSDTTKRIPSAAGRAVERVAASE).

This sequence belongs to the orbivirus VP5 family.

The protein resides in the virion. Its function is as follows. VP5 protein is one of the two proteins (with VP2) which constitute the virus particle outer capsid. Acts as a membrane permeabilization protein that mediates release of viral particles from endosomal compartments into the cytoplasm. Permeabilization activity is probably negatively regulated by VP2 and is triggered by endosomal degradation of VP2 and exposure to low pH. The sequence is that of Outer capsid protein VP5 (Segment-6) from Ixodes (gulls).